Reading from the N-terminus, the 153-residue chain is ORM1-like protein 2 (153 aa).

Residues 1–21 (MNVGVAHSEVNPNTRVMNSRG) lie on the Cytoplasmic side of the membrane. 2 helical membrane-spanning segments follow: residues 22 to 42 (IWLA…SIPF) and 43 to 63 (FSIP…MYVF). Over 64-105 (LHTVKGTPFETPDQGKARLLTHWEQMDYGLQFTSSRKFLSIS) the chain is Cytoplasmic. The helical transmembrane segment at 106 to 126 (PIVLYLLASFYTKYDAAHFLI) threads the bilayer. Over 127 to 153 (NTASLLSVLLPKLPQFHGVRLFGINKY) the chain is Extracellular.

The protein belongs to the ORM family. As to quaternary structure, ceramide-sensitive subunit of the serine palmitoyltransferase (SPT) complex, which is also composed of SPTLC1, SPTLC2/3 and SPTSSA/B.

It localises to the endoplasmic reticulum membrane. Its function is as follows. Plays an essential role in the homeostatic regulation of sphingolipid de novo biosynthesis by modulating the activity of the serine palmitoyltransferase (SPT) in response to ceramide levels. When complexed to SPT, the binding of ceramides to its N-terminus stabilizes a conformation that block SPT substrate entry, hence preventing SPT catalytic activity. Through this mechanism, maintains ceramide levels at sufficient concentrations for the production of complex sphingolipids, but which prevents the accumulation of ceramides to levels that trigger apoptosis. The protein is ORM1-like protein 2 (ORMDL2) of Bos taurus (Bovine).